The primary structure comprises 155 residues: Small ribosomal subunit protein uS13 (155 aa).

Basic residues predominate over residues 135 to 145 (QHTKTTGRRGR). Residues 135–155 (QHTKTTGRRGRTVGVSRTKGA) are disordered. The segment covering 146 to 155 (TVGVSRTKGA) has biased composition (low complexity).

Belongs to the universal ribosomal protein uS13 family. Component of the small ribosomal subunit.

It localises to the cytoplasm. Component of the small ribosomal subunit. The ribosome is a large ribonucleoprotein complex responsible for the synthesis of proteins in the cell. This chain is Small ribosomal subunit protein uS13 (RPS18), found in Entamoeba histolytica (strain ATCC 30459 / HM-1:IMSS / ABRM).